Consider the following 182-residue polypeptide: Small ribosomal subunit protein uS4c (182 aa).

Positions 13-34 are disordered; it reads GLTSKRPRSGSDPKNQLRSGKR. An S4 RNA-binding domain is found at 82-143; the sequence is MRLDNILFRL…KQRSKALIQN (62 aa).

Belongs to the universal ribosomal protein uS4 family. In terms of assembly, part of the 30S ribosomal subunit. Contacts protein S5. The interaction surface between S4 and S5 is involved in control of translational fidelity.

It is found in the plastid. It localises to the chloroplast. Its function is as follows. One of the primary rRNA binding proteins, it binds directly to 16S rRNA where it nucleates assembly of the body of the 30S subunit. Functionally, with S5 and S12 plays an important role in translational accuracy. This chain is Small ribosomal subunit protein uS4c (rps4), found in Iris lutescens (Crimean iris).